A 130-amino-acid polypeptide reads, in one-letter code: Large-conductance mechanosensitive channel (130 aa).

2 helical membrane passes run 14 to 34 (IIDLAVAVVIGGAFGAIVTSF) and 73 to 93 (FVDFIIIAFSIFLAIKFLVKF).

Belongs to the MscL family. Homopentamer.

It localises to the cell membrane. Its function is as follows. Channel that opens in response to stretch forces in the membrane lipid bilayer. May participate in the regulation of osmotic pressure changes within the cell. The polypeptide is Large-conductance mechanosensitive channel (Oceanobacillus iheyensis (strain DSM 14371 / CIP 107618 / JCM 11309 / KCTC 3954 / HTE831)).